Here is a 297-residue protein sequence, read N- to C-terminus: Oxidoreductase aprR (297 aa).

It belongs to the NmrA-type oxidoreductase family. Isoflavone reductase subfamily.

It participates in secondary metabolite biosynthesis. Its function is as follows. Oxidoreductase; part of the gene cluster that mediates the biosynthesis of the asperipin-2a, a bicyclic peptide that possesses two macrocyclic ether rings consisting of 14- and 17-membered paracyclophans. The pathway starts with the processing of the precursor aprA by kexin proteases to produce 11 identical copies of the hexapeptide Phe-Tyr-Tyr-Thr-Gly-Tyr. Macrocyclization of asperipin-2a may accompany an alpha-hydroxylation-dehydration sequence to give an imine, which is readily hydrolyzed to yield putative ketone intermediate. The reductase aprR may be required for the final reduction to yield asperipin-2a. This Aspergillus flavus (strain ATCC 200026 / FGSC A1120 / IAM 13836 / NRRL 3357 / JCM 12722 / SRRC 167) protein is Oxidoreductase aprR.